Consider the following 310-residue polypeptide: tRNA uridine(34) hydroxylase (310 aa).

Residues 127–225 (KNQNTIVIDT…YLDEISKEEN (99 aa)) enclose the Rhodanese domain. The Cysteine persulfide intermediate role is filled by Cys185.

It belongs to the TrhO family.

It catalyses the reaction uridine(34) in tRNA + AH2 + O2 = 5-hydroxyuridine(34) in tRNA + A + H2O. Catalyzes oxygen-dependent 5-hydroxyuridine (ho5U) modification at position 34 in tRNAs. The polypeptide is tRNA uridine(34) hydroxylase (Prochlorococcus marinus (strain MIT 9215)).